The chain runs to 360 residues: Cuticle collagen dpy-2 (360 aa).

Triple-helical region regions lie at residues 123–152, 174–230, and 238–303; these read GERGPSGDSGLPALPGAPGPDGAPGRPGTT, GPRG…KGRT, and GPPG…PGTC. Disordered regions lie at residues 127 to 158 and 174 to 360; these read PSGDSGLPALPGAPGPDGAPGRPGTTPNASCI and GPRG…IRKW. The segment covering 189-198 has biased composition (gly residues); the sequence is GEYGIGGRPG. Positions 242–258 are enriched in low complexity; the sequence is DSGLPGPWGPPGSAGMP. Residues 273-288 are compositionally biased toward pro residues; sequence PGPPGAPGPGGMPGPN.

It belongs to the cuticular collagen family. Collagen polypeptide chains are complexed within the cuticle by disulfide bonds and other types of covalent cross-links.

Its function is as follows. Nematode cuticles are composed largely of collagen-like proteins. The cuticle functions both as an exoskeleton and as a barrier to protect the worm from its environment. Mutations in dpy-2 affects the body shape. This chain is Cuticle collagen dpy-2 (dpy-2), found in Caenorhabditis elegans.